We begin with the raw amino-acid sequence, 338 residues long: Ketol-acid reductoisomerase (NADP(+)) (338 aa).

A KARI N-terminal Rossmann domain is found at 1 to 181 (MQIYYDKDAD…GGGRAGIIET (181 aa)). NADP(+) contacts are provided by residues 24-27 (YGSQ), R47, S50, S52, and 82-85 (DEHQ). H107 is a catalytic residue. Position 133 (G133) interacts with NADP(+). The 146-residue stretch at 182–327 (TFREETETDL…ARLRDMMPWI (146 aa)) folds into the KARI C-terminal knotted domain. Mg(2+) is bound by residues D190, E194, E226, and E230. S251 lines the substrate pocket.

It belongs to the ketol-acid reductoisomerase family. It depends on Mg(2+) as a cofactor.

It catalyses the reaction (2R)-2,3-dihydroxy-3-methylbutanoate + NADP(+) = (2S)-2-acetolactate + NADPH + H(+). The enzyme catalyses (2R,3R)-2,3-dihydroxy-3-methylpentanoate + NADP(+) = (S)-2-ethyl-2-hydroxy-3-oxobutanoate + NADPH + H(+). The protein operates within amino-acid biosynthesis; L-isoleucine biosynthesis; L-isoleucine from 2-oxobutanoate: step 2/4. Its pathway is amino-acid biosynthesis; L-valine biosynthesis; L-valine from pyruvate: step 2/4. Functionally, involved in the biosynthesis of branched-chain amino acids (BCAA). Catalyzes an alkyl-migration followed by a ketol-acid reduction of (S)-2-acetolactate (S2AL) to yield (R)-2,3-dihydroxy-isovalerate. In the isomerase reaction, S2AL is rearranged via a Mg-dependent methyl migration to produce 3-hydroxy-3-methyl-2-ketobutyrate (HMKB). In the reductase reaction, this 2-ketoacid undergoes a metal-dependent reduction by NADPH to yield (R)-2,3-dihydroxy-isovalerate. The sequence is that of Ketol-acid reductoisomerase (NADP(+)) from Methylococcus capsulatus (strain ATCC 33009 / NCIMB 11132 / Bath).